A 185-amino-acid chain; its full sequence is Elongation factor P (185 aa).

This sequence belongs to the elongation factor P family.

The protein localises to the cytoplasm. Its pathway is protein biosynthesis; polypeptide chain elongation. In terms of biological role, involved in peptide bond synthesis. Stimulates efficient translation and peptide-bond synthesis on native or reconstituted 70S ribosomes in vitro. Probably functions indirectly by altering the affinity of the ribosome for aminoacyl-tRNA, thus increasing their reactivity as acceptors for peptidyl transferase. The chain is Elongation factor P from Microcystis aeruginosa (strain NIES-843 / IAM M-2473).